The primary structure comprises 332 residues: 4-hydroxy-3-methylbut-2-enyl diphosphate reductase (332 aa).

Position 13 (cysteine 13) interacts with [4Fe-4S] cluster. Residues histidine 41 and histidine 75 each coordinate (2E)-4-hydroxy-3-methylbut-2-enyl diphosphate. Residues histidine 41 and histidine 75 each coordinate dimethylallyl diphosphate. Isopentenyl diphosphate-binding residues include histidine 41 and histidine 75. Residue cysteine 97 coordinates [4Fe-4S] cluster. A (2E)-4-hydroxy-3-methylbut-2-enyl diphosphate-binding site is contributed by histidine 125. Histidine 125 serves as a coordination point for dimethylallyl diphosphate. Histidine 125 is an isopentenyl diphosphate binding site. Glutamate 127 serves as the catalytic Proton donor. Residue threonine 168 participates in (2E)-4-hydroxy-3-methylbut-2-enyl diphosphate binding. A [4Fe-4S] cluster-binding site is contributed by cysteine 229. (2E)-4-hydroxy-3-methylbut-2-enyl diphosphate-binding residues include serine 257, serine 258, asparagine 259, and serine 306. Dimethylallyl diphosphate contacts are provided by serine 257, serine 258, asparagine 259, and serine 306. Serine 257, serine 258, asparagine 259, and serine 306 together coordinate isopentenyl diphosphate.

This sequence belongs to the IspH family. It depends on [4Fe-4S] cluster as a cofactor.

The catalysed reaction is isopentenyl diphosphate + 2 oxidized [2Fe-2S]-[ferredoxin] + H2O = (2E)-4-hydroxy-3-methylbut-2-enyl diphosphate + 2 reduced [2Fe-2S]-[ferredoxin] + 2 H(+). It catalyses the reaction dimethylallyl diphosphate + 2 oxidized [2Fe-2S]-[ferredoxin] + H2O = (2E)-4-hydroxy-3-methylbut-2-enyl diphosphate + 2 reduced [2Fe-2S]-[ferredoxin] + 2 H(+). It functions in the pathway isoprenoid biosynthesis; dimethylallyl diphosphate biosynthesis; dimethylallyl diphosphate from (2E)-4-hydroxy-3-methylbutenyl diphosphate: step 1/1. Its pathway is isoprenoid biosynthesis; isopentenyl diphosphate biosynthesis via DXP pathway; isopentenyl diphosphate from 1-deoxy-D-xylulose 5-phosphate: step 6/6. Its function is as follows. Catalyzes the conversion of 1-hydroxy-2-methyl-2-(E)-butenyl 4-diphosphate (HMBPP) into a mixture of isopentenyl diphosphate (IPP) and dimethylallyl diphosphate (DMAPP). Acts in the terminal step of the DOXP/MEP pathway for isoprenoid precursor biosynthesis. In Chlorobaculum tepidum (strain ATCC 49652 / DSM 12025 / NBRC 103806 / TLS) (Chlorobium tepidum), this protein is 4-hydroxy-3-methylbut-2-enyl diphosphate reductase.